We begin with the raw amino-acid sequence, 699 residues long: Elongation factor G (699 aa).

The 283-residue stretch at 10–292 (NRTRNIGIMA…AVIDYLPSPT (283 aa)) folds into the tr-type G domain. Residues 19–26 (AHIDAGKT), 90–94 (DTPGH), and 144–147 (NKMD) contribute to the GTP site. The tract at residues 292–312 (TDVPAIRGEEDDGSEGSRSAS) is disordered.

This sequence belongs to the TRAFAC class translation factor GTPase superfamily. Classic translation factor GTPase family. EF-G/EF-2 subfamily.

It localises to the cytoplasm. Functionally, catalyzes the GTP-dependent ribosomal translocation step during translation elongation. During this step, the ribosome changes from the pre-translocational (PRE) to the post-translocational (POST) state as the newly formed A-site-bound peptidyl-tRNA and P-site-bound deacylated tRNA move to the P and E sites, respectively. Catalyzes the coordinated movement of the two tRNA molecules, the mRNA and conformational changes in the ribosome. The protein is Elongation factor G of Coxiella burnetii (strain CbuG_Q212) (Coxiella burnetii (strain Q212)).